A 541-amino-acid polypeptide reads, in one-letter code: Chaperonin GroEL 2 (541 aa).

Residues 29–32 (TLGP), 86–90 (DGTTT), glycine 413, and aspartate 492 each bind ATP.

It belongs to the chaperonin (HSP60) family. In terms of assembly, forms a cylinder of 14 subunits composed of two heptameric rings stacked back-to-back. Interacts with the co-chaperonin GroES.

It localises to the cytoplasm. The enzyme catalyses ATP + H2O + a folded polypeptide = ADP + phosphate + an unfolded polypeptide.. Together with its co-chaperonin GroES, plays an essential role in assisting protein folding. The GroEL-GroES system forms a nano-cage that allows encapsulation of the non-native substrate proteins and provides a physical environment optimized to promote and accelerate protein folding. This is Chaperonin GroEL 2 from Nocardia farcinica (strain IFM 10152).